We begin with the raw amino-acid sequence, 436 residues long: Fibrinogen gamma chain (436 aa).

Positions 1 to 25 are cleaved as a signal peptide; that stretch reads MSWSLQPPSFLLCCLLLLFSPTGLA. A glycan (N-linked (GlcNAc...) asparagine) is linked at asparagine 77. One can recognise a Fibrinogen C-terminal domain in the interval 169–415; that stretch reads QIHDTTGKDC…ETTMKIIPFN (247 aa). A disulfide bridge links cysteine 178 with cysteine 207. Residues aspartate 343, aspartate 345, and glycine 349 each contribute to the Ca(2+) site. The cysteines at positions 351 and 364 are disulfide-linked. Glutamine 423 participates in a covalent cross-link: Isoglutamyl lysine isopeptide (Gln-Lys) (interchain with K-431). Residue serine 430 is modified to Phosphoserine. An Isoglutamyl lysine isopeptide (Lys-Gln) (interchain with Q-423) cross-link involves residue lysine 431.

As to quaternary structure, heterohexamer; disulfide linked. Contains 2 sets of 3 non-identical chains (alpha, beta and gamma). The 2 heterotrimers are in head to head conformation with the N-termini in a small central domain. Conversion of fibrinogen to fibrin is triggered by thrombin, which cleaves fibrinopeptides A and B from alpha and beta chains, and thus exposes the N-terminal polymerization sites responsible for the formation of the soft clot. The soft clot is converted into the hard clot by factor XIIIA which catalyzes the epsilon-(gamma-glutamyl)lysine cross-linking between gamma chains (stronger) and between alpha chains (weaker) of different monomers.

The protein localises to the secreted. Together with fibrinogen alpha (FGA) and fibrinogen beta (FGB), polymerizes to form an insoluble fibrin matrix. Fibrin has a major function in hemostasis as one of the primary components of blood clots. In addition, functions during the early stages of wound repair to stabilize the lesion and guide cell migration during re-epithelialization. Was originally thought to be essential for platelet aggregation, based on in vitro studies using anticoagulated blood. However, subsequent studies have shown that it is not absolutely required for thrombus formation in vivo. Enhances expression of SELP in activated platelets via an ITGB3-dependent pathway. Maternal fibrinogen is essential for successful pregnancy. Fibrin deposition is also associated with infection, where it protects against IFNG-mediated hemorrhage. May also facilitate the immune response via both innate and T-cell mediated pathways. In Mus musculus (Mouse), this protein is Fibrinogen gamma chain (Fgg).